The following is a 353-amino-acid chain: Phosphoribosylformylglycinamidine cyclo-ligase (353 aa).

The protein belongs to the AIR synthase family.

The protein resides in the cytoplasm. The enzyme catalyses 2-formamido-N(1)-(5-O-phospho-beta-D-ribosyl)acetamidine + ATP = 5-amino-1-(5-phospho-beta-D-ribosyl)imidazole + ADP + phosphate + H(+). It participates in purine metabolism; IMP biosynthesis via de novo pathway; 5-amino-1-(5-phospho-D-ribosyl)imidazole from N(2)-formyl-N(1)-(5-phospho-D-ribosyl)glycinamide: step 2/2. In Symbiobacterium thermophilum (strain DSM 24528 / JCM 14929 / IAM 14863 / T), this protein is Phosphoribosylformylglycinamidine cyclo-ligase.